The following is a 227-amino-acid chain: Isopentenyl-diphosphate Delta-isomerase 1 (227 aa).

Substrate is bound at residue Lys36. Mg(2+) is bound by residues His40 and His51. Positions 49–199 constitute a Nudix hydrolase domain; the sequence is LLHRAFSVFL…EIKITPWFQI (151 aa). Residues Arg70 and Lys74 each coordinate substrate. Cys86 is an active-site residue. Residue Ser87 coordinates substrate. Residues Glu146 and Glu148 each contribute to the Mg(2+) site. Glu148 is an active-site residue. An N6-acetyllysine modification is found at Lys176. Residues 225–227 carry the Microbody targeting signal motif; sequence HRM.

This sequence belongs to the IPP isomerase type 1 family. As to quaternary structure, monomer. Mg(2+) serves as cofactor.

It is found in the peroxisome. The catalysed reaction is isopentenyl diphosphate = dimethylallyl diphosphate. It participates in isoprenoid biosynthesis; dimethylallyl diphosphate biosynthesis; dimethylallyl diphosphate from isopentenyl diphosphate: step 1/1. Its function is as follows. Catalyzes the 1,3-allylic rearrangement of the homoallylic substrate isopentenyl (IPP) to its highly electrophilic allylic isomer, dimethylallyl diphosphate (DMAPP). In Macaca fascicularis (Crab-eating macaque), this protein is Isopentenyl-diphosphate Delta-isomerase 1 (IDI1).